Consider the following 160-residue polypeptide: S-ribosylhomocysteine lyase (160 aa).

Residues His57, His61, and Cys127 each coordinate Fe cation.

The protein belongs to the LuxS family. In terms of assembly, homodimer. Fe cation is required as a cofactor.

It carries out the reaction S-(5-deoxy-D-ribos-5-yl)-L-homocysteine = (S)-4,5-dihydroxypentane-2,3-dione + L-homocysteine. Functionally, involved in the synthesis of autoinducer 2 (AI-2) which is secreted by bacteria and is used to communicate both the cell density and the metabolic potential of the environment. The regulation of gene expression in response to changes in cell density is called quorum sensing. Catalyzes the transformation of S-ribosylhomocysteine (RHC) to homocysteine (HC) and 4,5-dihydroxy-2,3-pentadione (DPD). The protein is S-ribosylhomocysteine lyase of Streptococcus agalactiae serotype V (strain ATCC BAA-611 / 2603 V/R).